The chain runs to 147 residues: MKFTKPLLLLIVAIIASSNAAETFSNFQVTNSDASSPCVTTPVELKVNTCQSACGSILNVLPVTGSTSKFTFNQFGAQDTKCAATPTSSNEFTCVDGKSKVAIGTTTYSVVCVPDKTNSSESDSSDSTRIGASFALFALALLSMLAL.

A signal peptide spans 1–20 (MKFTKPLLLLIVAIIASSNA). Asn-118 carries GPI-like-anchor amidated asparagine lipidation. N-linked (GlcNAc...) asparagine glycosylation occurs at Asn-118. Residues 119–147 (SSESDSSDSTRIGASFALFALALLSMLAL) constitute a propeptide, removed in mature form.

The protein belongs to the ponticulin family. The GPI-like-anchor contains a phosphoceramide group, rather than a phosphatidyl group.

It localises to the cell membrane. In Dictyostelium discoideum (Social amoeba), this protein is Ponticulin-like protein C2 (ponC2).